A 192-amino-acid chain; its full sequence is 3-hydroxyanthranilate 3,4-dioxygenase 1 (192 aa).

Arginine 50 provides a ligand contact to O2. 3 residues coordinate Fe cation: histidine 54, glutamate 60, and histidine 102. Substrate is bound at residue glutamate 60. Substrate is bound by residues arginine 106 and glutamate 116. The a divalent metal cation site is built by cysteine 131, cysteine 134, cysteine 168, and cysteine 171.

Belongs to the 3-HAO family. Fe(2+) is required as a cofactor.

It is found in the cytoplasm. It catalyses the reaction 3-hydroxyanthranilate + O2 = (2Z,4Z)-2-amino-3-carboxymuconate 6-semialdehyde. Its pathway is cofactor biosynthesis; NAD(+) biosynthesis; quinolinate from L-kynurenine: step 3/3. In terms of biological role, catalyzes the oxidative ring opening of 3-hydroxyanthranilate to 2-amino-3-carboxymuconate semialdehyde, which spontaneously cyclizes to quinolinate. This Aspergillus fumigatus (strain CBS 144.89 / FGSC A1163 / CEA10) (Neosartorya fumigata) protein is 3-hydroxyanthranilate 3,4-dioxygenase 1 (bna1-1).